The primary structure comprises 433 residues: Type I acyl-CoA thioesterase mpaH (433 aa).

The tract at residues 58–246 (HGVGLPKELY…VKARFDAAAD (189 aa)) is abhydrolase domain. Residue Val-60 coordinates substrate. Ser-139 serves as the catalytic Nucleophile. A substrate-binding site is contributed by Phe-140. Residues Asp-163 and His-365 contribute to the active site.

The protein belongs to the AB hydrolase superfamily. MpaH hydrolase family. In terms of assembly, homodimer.

The protein resides in the peroxisome matrix. It carries out the reaction mycophenolyl-CoA + H2O = mycophenolate + CoA + H(+). Its pathway is secondary metabolite biosynthesis; terpenoid biosynthesis. Its function is as follows. Type I acyl-CoA thioesterase; part of the gene cluster that mediates the biosynthesis of mycophenolic acid (MPA), the first isolated antibiotic natural product in the world obtained from a culture of Penicillium brevicompactum in 1893. MpaH acts as a peroxisomal acyl-CoA hydrolase that converts MPA-CoA into the final product MPA. The first step of the pathway is the synthesis of 5-methylorsellinic acid (5MOA) by the cytosolic polyketide synthase mpaC. 5MOA is then converted to the phthalide compound 5,7-dihydroxy-4,6-dimethylphthalide (DHMP) by the endoplasmic reticulum-bound cytochrome P450 monooxygenase mpaDE. MpaDE first catalyzes hydroxylation of 5-MOA to 4,6-dihydroxy-2-(hydroxymethyl)-3-methylbenzoic acid (DHMB). MpaDE then acts as a lactone synthase that catalyzes the ring closure to convert DHMB into DHMP. The next step is the prenylation of DHMP by the Golgi apparatus-associated prenyltransferase mpaA to yield farnesyl-DHMP (FDHMP). The ER-bound oxygenase mpaB then mediates the oxidative cleavage the C19-C20 double bond in FDHMP to yield FDHMP-3C via a mycophenolic aldehyde intermediate. The O-methyltransferase mpaG catalyzes the methylation of FDHMP-3C to yield MFDHMP-3C. After the cytosolic methylation of FDHMP-3C, MFDHMP-3C enters into peroxisomes probably via free diffusion due to its low molecular weight. Upon a peroxisomal CoA ligation reaction, catalyzed by a beta-oxidation component enzyme acyl-CoA ligase ACL891, MFDHMP-3C-CoA would then be restricted to peroxisomes for the following beta-oxidation pathway steps. The peroxisomal beta-oxidation machinery than converts MFDHMP-3C-CoA into MPA_CoA, via a beta-oxidation chain-shortening process. Finally mpaH acts as a peroxisomal acyl-CoA hydrolase with high substrate specificity toward MPA-CoA to release the final product MPA. The protein is Type I acyl-CoA thioesterase mpaH of Penicillium roqueforti (strain FM164).